Consider the following 378-residue polypeptide: Probable mannosyltransferase MNT3 (378 aa).

Over Met1–His4 the chain is Cytoplasmic. The chain crosses the membrane as a helical; Signal-anchor for type II membrane protein span at residues Leu5 to Phe25. Over Lys26–Asn378 the chain is Lumenal. Residues Asn73 and Asn149 are each glycosylated (N-linked (GlcNAc...) asparagine).

Belongs to the glycosyltransferase 15 family.

It is found in the membrane. Transfers an alpha-D-mannosyl residue from GDP-mannose into lipid-linked oligosaccharide, forming an alpha-(1-&gt;2)-D-mannosyl-D-mannose linkage. The polypeptide is Probable mannosyltransferase MNT3 (MNT3) (Candida albicans (strain SC5314 / ATCC MYA-2876) (Yeast)).